A 250-amino-acid chain; its full sequence is NAD(P)H-quinone oxidoreductase subunit K, chloroplastic (250 aa).

Residues C67, C68, C132, and C163 each contribute to the [4Fe-4S] cluster site.

This sequence belongs to the complex I 20 kDa subunit family. NDH is composed of at least 16 different subunits, 5 of which are encoded in the nucleus. [4Fe-4S] cluster serves as cofactor.

It is found in the plastid. The protein localises to the chloroplast thylakoid membrane. It catalyses the reaction a plastoquinone + NADH + (n+1) H(+)(in) = a plastoquinol + NAD(+) + n H(+)(out). The enzyme catalyses a plastoquinone + NADPH + (n+1) H(+)(in) = a plastoquinol + NADP(+) + n H(+)(out). NDH shuttles electrons from NAD(P)H:plastoquinone, via FMN and iron-sulfur (Fe-S) centers, to quinones in the photosynthetic chain and possibly in a chloroplast respiratory chain. The immediate electron acceptor for the enzyme in this species is believed to be plastoquinone. Couples the redox reaction to proton translocation, and thus conserves the redox energy in a proton gradient. This is NAD(P)H-quinone oxidoreductase subunit K, chloroplastic from Adiantum capillus-veneris (Maidenhair fern).